Here is a 582-residue protein sequence, read N- to C-terminus: Potassium voltage-gated channel subfamily KQT member 1 (582 aa).

Over R1 to W31 the chain is Cytoplasmic. Residues K32–L53 traverse the membrane as a helical segment. At S54–T64 the chain is on the extracellular side. The helical transmembrane segment at G65–W87 threads the bilayer. The Cytoplasmic portion of the chain corresponds to S88–R103. Residues F104–K129 form a helical membrane-spanning segment. The Extracellular segment spans residues G130–A137. A helical; Voltage-sensor membrane pass occupies residues I138–D153. Residues M149 to G157 form an interaction with KCNE3 region. Residues R154–Q171 lie on the Cytoplasmic side of the membrane. Q155 is a binding site for a 1,2-diacyl-sn-glycero-3-phospho-(1D-myo-inositol-4,5-bisphosphate). The helical transmembrane segment at E172–A194 threads the bilayer. The Extracellular portion of the chain corresponds to E195 to Y210. A glycan (N-linked (GlcNAc...) asparagine) is linked at N200. Positions A211 to P231 form an intramembrane region, pore-forming. Residues Q232–T233 lie on the Extracellular side of the membrane. A helical transmembrane segment spans residues W234–G259. At S260 to S582 the chain is on the cytoplasmic side. An interaction with CALM region spans residues A281–Y293. Phosphoserine is present on residues S318 and S320. An interaction with CALM; calcium-dependent region spans residues K426–F440. Residues P446 to L483 form an interaction with KCNE1 C-terminus region. The stretch at S496–H532 forms a coiled coil. The interaction with AKAP9 stretch occupies residues I499–L527. Positions G500–H531 are C-terminal assembly domain (tetramerization). The disordered stretch occupies residues L530 to S582.

The protein belongs to the potassium channel family. KQT (TC 1.A.1.15) subfamily. Kv7.1/KCNQ1 sub-subfamily. Tetramer. Heterotetramer with KCNE1; targets to the membrane raft. Interacts (via C-terminus) with CALM; forms a heterooctameric structure (with 4:4 KCNQ1:CALM stoichiometry) in a calcium-independent manner. Interacts with AKAP9; targets protein kinase A (PKA) catalytic and regulatory subunits and protein phosphatase 1 (PP1) to the KCNQ1-KCNE1 complex, allowing PKA-mediated phosphorylation and increase of delayed rectifier potassium channel activity. Interacts with KCNE2; form a heterooligomer complex that targets to the membrane raft and leading to currents with an apparently instantaneous activation, a rapid deactivation process and a linear current-voltage relationship and decreases the amplitude of the outward current. Interacts with AP2M1; mediates estrogen-induced internalization via clathrin-coated vesicles. Interacts with NEDD4L; promotes internalization and decreases I(Ks) currents. Interacts with USP2; counteracts the NEDD4L-specific down-regulation of I(Ks) and restore plasma membrane localization. Heterotetramer with KCNQ5; has a voltage-gated potassium channel activity. Interacts with KCNE3; four KCNE3 molecules are bound to one KCNQ1 tetramer (4:4 KCNQ1:KCNE3 stoichiometry); alters membrane raft localization; affects KCNQ1 structure and gating properties. Interacts with KCNE4; impairs KCNQ1 localization in lipid rafts and inhibits voltage-gated potassium channel activity. Interacts with KCNE5; impairs KCNQ1 localization in lipid rafts and only conducts current upon strong and continued depolarization. In terms of processing, phosphorylated by PKA; increases delayed rectifier potassium channel activity of the KCNQ1-KCNE1 complex through a macromolecular complex that includes PKA, PP1, and the targeting protein AKAP9. Ubiquitinated by NEDD4L; promotes internalization. The ubiquitinylated form is internalized through a clathrin-mediated endocytosis by interacting with AP2M1 and is recycled back to the cell membrane via RAB4A and RAB11A. Post-translationally, deubiquitinated by USP2; counteracts the NEDD4L-specific down-regulation of I(Ks) and restores the membrane localization.

It localises to the cell membrane. The protein localises to the cytoplasmic vesicle membrane. The protein resides in the early endosome. Its subcellular location is the membrane raft. It is found in the endoplasmic reticulum. It localises to the basolateral cell membrane. The catalysed reaction is K(+)(in) = K(+)(out). With respect to regulation, PIP2 molecule is essential to activate KCNQ channels by inducing the coupling of the voltage-sensing domain (VSD) and the pore-forming domain (PD). Upon channel activation, PIP2 disrupts the VSD-calmodulin/CALM interactions, causing the release of CALM from the VSD which triggers the opening of the gate. Calcium potentiates KCNQ1 channel current through calcium-bound CALM. Calcium-bound CALM competes with PIP2 to stabilize the channel open state. Functionally, pore-forming subunit of the voltage-gated potassium (Kv) channel involved in the regulation of cardiomyocyte excitability and important in normal development and functions of myocardium, inner ear, stomach and colon. Associates with KCNE beta subunits that modulates current kinetics. Induces a voltage-dependent by rapidly activating and slowly deactivating potassium-selective outward current. Also promotes a delayed voltage activated potassium current showing outward rectification characteristic. During beta-adrenergic receptor stimulation participates in cardiac repolarization by associating with KCNE1 to form the I(Ks) cardiac potassium current that increases the amplitude and slows down the activation kinetics of outward potassium current I(Ks). Muscarinic agonist oxotremorine-M strongly suppresses KCNQ1/KCNE1 current. When associated with KCNE3, forms the potassium channel that is important for cyclic AMP-stimulated intestinal secretion of chloride ions. This interaction with KCNE3 is reduced by 17beta-estradiol, resulting in the reduction of currents. During conditions of increased substrate load, maintains the driving force for proximal tubular and intestinal sodium ions absorption, gastric acid secretion, and cAMP-induced jejunal chloride ions secretion. Allows the provision of potassium ions to the luminal membrane of the secretory canaliculus in the resting state as well as during stimulated acid secretion. When associated with KCNE2, forms a heterooligomer complex leading to currents with an apparently instantaneous activation, a rapid deactivation process and a linear current-voltage relationship and decreases the amplitude of the outward current. When associated with KCNE4, inhibits voltage-gated potassium channel activity. When associated with KCNE5, this complex only conducts current upon strong and continued depolarization. Also forms a heterotetramer with KCNQ5 that has a voltage-gated potassium channel activity. Binds with phosphatidylinositol 4,5-bisphosphate. This Felis catus (Cat) protein is Potassium voltage-gated channel subfamily KQT member 1.